The sequence spans 340 residues: Flap endonuclease 1 (340 aa).

The segment at 1–98 (MGVDLGGLVE…ETIKARAEVR (98 aa)) is N-domain. 7 residues coordinate Mg(2+): Asp27, Asp80, Glu151, Glu153, Asp172, Asp174, and Asp235. An I-domain region spans residues 115–256 (EAYKYAQAST…TALKLVKKHG (142 aa)). An interaction with PCNA region spans residues 332–340 (KQKTLSSWF).

This sequence belongs to the XPG/RAD2 endonuclease family. FEN1 subfamily. As to quaternary structure, interacts with PCNA. PCNA stimulates the nuclease activity without altering cleavage specificity. It depends on Mg(2+) as a cofactor.

Functionally, structure-specific nuclease with 5'-flap endonuclease and 5'-3' exonuclease activities involved in DNA replication and repair. During DNA replication, cleaves the 5'-overhanging flap structure that is generated by displacement synthesis when DNA polymerase encounters the 5'-end of a downstream Okazaki fragment. Binds the unpaired 3'-DNA end and kinks the DNA to facilitate 5' cleavage specificity. Cleaves one nucleotide into the double-stranded DNA from the junction in flap DNA, leaving a nick for ligation. Also involved in the base excision repair (BER) pathway. Acts as a genome stabilization factor that prevents flaps from equilibrating into structures that lead to duplications and deletions. Also possesses 5'-3' exonuclease activity on nicked or gapped double-stranded DNA. This chain is Flap endonuclease 1, found in Methanocella arvoryzae (strain DSM 22066 / NBRC 105507 / MRE50).